The chain runs to 200 residues: Large ribosomal subunit protein uL4 (200 aa).

Positions 43–65 are disordered; it reads RAQKTRSEVSGGGAKPWRQKGTG.

Belongs to the universal ribosomal protein uL4 family. In terms of assembly, part of the 50S ribosomal subunit.

Functionally, one of the primary rRNA binding proteins, this protein initially binds near the 5'-end of the 23S rRNA. It is important during the early stages of 50S assembly. It makes multiple contacts with different domains of the 23S rRNA in the assembled 50S subunit and ribosome. In terms of biological role, forms part of the polypeptide exit tunnel. The polypeptide is Large ribosomal subunit protein uL4 (Aliivibrio salmonicida (strain LFI1238) (Vibrio salmonicida (strain LFI1238))).